The chain runs to 373 residues: MGYLFQETLSSNPKTPIVVDDDNELGLMAVRLANAAAFPMVLKAALELGVFDTLYAAASRTDSFLSPYEIASKLPTTPRNPEAPVLLDRMLRLLASYSMVKCGKALSGKGERVYRAEPICRFFLKDNIQDIGSLASQVIVNFDSVFLNTWAQLKDVVLEGGDAFGRAHGGMKLFDYMGTDERFSKLFNQTGFTIAVVKKALEVYEGFKGVKVLVDVGGGVGNTLGVVTSKYPNIKGINFDLTCALAQAPSYPGVEHVAGDMFVDVPTGDAMILKRILHDWTDEDCVKILKNCWKSLPENGKVVVIELVTPDEAENGDINANIAFDMDMLMFTQCSGGKERSRAEFEALAAASGFTHCKFVCQAYHCWIIEFCK.

The S-adenosyl-L-homocysteine site is built by Gly-217, Asp-240, Asp-260, Met-261, and Lys-274. The active-site Proton acceptor is His-278.

This sequence belongs to the class I-like SAM-binding methyltransferase superfamily. Cation-independent O-methyltransferase family. Interacts with B'GAMMA.

Its pathway is secondary metabolite biosynthesis. In terms of biological role, involved in indole glucosinolate biosynthesis. Catalyzes methoxylation reactions of the glucosinolate indole ring. Converts the hydroxy intermediates 4-hydroxy-indol-3-yl-methylglucosinolate (4OH-I3M) and 1-hydroxy-indol-3-yl-methylglucosinolate (1OH-I3M) to 4-methoxy-indol-3-yl-methylglucosinolate (4MO-I3M) and 1-methoxy-indol-3-yl-methylglucosinolate (1MO-I3M), respectively. The sequence is that of Indole glucosinolate O-methyltransferase 1 from Arabidopsis thaliana (Mouse-ear cress).